A 397-amino-acid polypeptide reads, in one-letter code: Tubby-like protein 8 (397 aa).

The span at 1–16 (MAGSRKVNDLLEENKG) shows a compositional bias: basic and acidic residues. The segment at 1–46 (MAGSRKVNDLLEENKGNVDTITGSLSTQKGEDKENVSPEKVSTSVE) is disordered. Over residues 17–28 (NVDTITGSLSTQ) the composition is skewed to polar residues.

This sequence belongs to the TUB family. In terms of tissue distribution, mostly expressed in roots, flowers and siliques.

In Arabidopsis thaliana (Mouse-ear cress), this protein is Tubby-like protein 8.